Here is a 199-residue protein sequence, read N- to C-terminus: Probable chemoreceptor glutamine deamidase CheD (199 aa).

It belongs to the CheD family.

The enzyme catalyses L-glutaminyl-[protein] + H2O = L-glutamyl-[protein] + NH4(+). Its function is as follows. Probably deamidates glutamine residues to glutamate on methyl-accepting chemotaxis receptors (MCPs), playing an important role in chemotaxis. The protein is Probable chemoreceptor glutamine deamidase CheD of Cereibacter sphaeroides (Rhodobacter sphaeroides).